The primary structure comprises 121 residues: Basic phospholipase A2 homolog (121 aa).

Disulfide bonds link Cys26–Cys115, Cys28–Cys44, Cys43–Cys95, Cys49–Cys121, Cys50–Cys88, Cys57–Cys81, and Cys75–Cys86.

It belongs to the phospholipase A2 family. Group II subfamily. K49 sub-subfamily. Homodimer. As to expression, expressed by the venom gland.

The protein localises to the secreted. Snake venom phospholipase A2 homolog that lacks enzymatic activity, but has myotoxic and cytolytic activities. In Metlapilcoatlus nummifer (Mexican jumping pitviper), this protein is Basic phospholipase A2 homolog.